A 472-amino-acid polypeptide reads, in one-letter code: Aspartyl/glutamyl-tRNA(Asn/Gln) amidotransferase subunit B (472 aa).

This sequence belongs to the GatB/GatE family. GatB subfamily. Heterotrimer of A, B and C subunits.

The catalysed reaction is L-glutamyl-tRNA(Gln) + L-glutamine + ATP + H2O = L-glutaminyl-tRNA(Gln) + L-glutamate + ADP + phosphate + H(+). It carries out the reaction L-aspartyl-tRNA(Asn) + L-glutamine + ATP + H2O = L-asparaginyl-tRNA(Asn) + L-glutamate + ADP + phosphate + 2 H(+). Allows the formation of correctly charged Asn-tRNA(Asn) or Gln-tRNA(Gln) through the transamidation of misacylated Asp-tRNA(Asn) or Glu-tRNA(Gln) in organisms which lack either or both of asparaginyl-tRNA or glutaminyl-tRNA synthetases. The reaction takes place in the presence of glutamine and ATP through an activated phospho-Asp-tRNA(Asn) or phospho-Glu-tRNA(Gln). The protein is Aspartyl/glutamyl-tRNA(Asn/Gln) amidotransferase subunit B of Mycoplasmopsis agalactiae (strain NCTC 10123 / CIP 59.7 / PG2) (Mycoplasma agalactiae).